A 417-amino-acid chain; its full sequence is Lactose permease (417 aa).

At M1 the chain carries N-formylmethionine; partial. Residues 1–7 (MYYLKNT) are Cytoplasmic-facing. The helical transmembrane segment at 8-34 (NFWMFGLFFFFYFFIMGAYFPFFPIWL) threads the bilayer. Topologically, residues 35–41 (HDINHIS) are periplasmic. Residues 42 to 70 (KSDTGIIFAAISLFSLLFQPLFGLLSDKL) form a helical membrane-spanning segment. Residues 71 to 74 (GLRK) lie on the Cytoplasmic side of the membrane. A helical membrane pass occupies residues 75-100 (YLLWIITGMLVMFAPFFIFIFGPLLQ). Residues 101–104 (YNIL) lie on the Periplasmic side of the membrane. Residues 105-129 (VGSIVGGIYLGFCFNAGAPAVEAFI) form a helical membrane-spanning segment. The Cytoplasmic portion of the chain corresponds to 130–140 (EKVSRRSNFEF). A helical transmembrane segment spans residues 141-163 (GRARMFGCVGWALCASIVGIMFT). Topologically, residues 164-166 (INN) are periplasmic. A helical transmembrane segment spans residues 167 to 186 (QFVFWLGSGCALILAVLLFF). Over 187-220 (AKTDAPSSATVANAVGANHSAFSLKLALELFRQP) the chain is Cytoplasmic. A helical transmembrane segment spans residues 221 to 249 (KLWFLSLYVIGVSCTYDVFDQQFANFFTS). Residues 250–253 (FFAT) are Periplasmic-facing. The chain crosses the membrane as a helical span at residues 254–278 (GEQGTRVFGYVTTMGELLNASIMFF). Over 279-288 (APLIINRIGG) the chain is Cytoplasmic. Residues 289–308 (KNALLLAGTIMSVRIIGSSF) traverse the membrane as a helical segment. Residues 309 to 311 (ATS) are Periplasmic-facing. The chain crosses the membrane as a helical span at residues 312–334 (ALEVVILKTLHMFEVPFLLVGCF). Residues 335–346 (KYITSQFEVRFS) lie on the Cytoplasmic side of the membrane. Residues 347 to 374 (ATIYLVCFCFFKQLAMIFMSVLAGNMYE) form a helical membrane-spanning segment. Topologically, residues 375-377 (SIG) are periplasmic. A helical membrane pass occupies residues 378-398 (FQGAYLVLGLVALGFTLISVF). Residues 399-417 (TLSGPGPLSLLRRQVNEVA) are Cytoplasmic-facing.

Monomer.

The protein localises to the cell inner membrane. The catalysed reaction is lactose(in) + H(+)(in) = lactose(out) + H(+)(out). The enzyme catalyses melibiose(in) + H(+)(in) = melibiose(out) + H(+)(out). Its activity is regulated as follows. Inhibited by the proton ionophore carbonyl cyanide m-chlorophenylhydrazone (CCCP). Responsible for transport of beta-galactosides into the cell, with the concomitant import of a proton (symport system). Can transport lactose, melibiose, the synthetic disaccharide lactulose or the analog methyl-1-thio-beta,D-galactopyranoside (TMG), but not sucrose or fructose. The substrate specificity is directed toward the galactopyranosyl moiety of the substrate. This Escherichia coli (strain K12) protein is Lactose permease.